Consider the following 237-residue polypeptide: Cysteine-rich venom protein DIS3 (237 aa).

The N-terminal stretch at 1–18 (MFVFILLSLAAVLQQSFG) is a signal peptide. Residues 37 to 165 (VDKHNAFRRS…SYDYFYVCQY (129 aa)) enclose the SCP domain. Intrachain disulfides connect cysteine 74-cysteine 152, cysteine 91-cysteine 166, cysteine 147-cysteine 163, cysteine 185-cysteine 192, cysteine 188-cysteine 197, cysteine 201-cysteine 234, and cysteine 219-cysteine 232. In terms of domain architecture, ShKT spans 201 to 234 (CSREDVFTNCKSLVAKSNCQDDYIRKNCLATCFC).

The protein belongs to the CRISP family. Expressed by the venom gland.

Its subcellular location is the secreted. Its function is as follows. Weakly blocks contraction of smooth muscle elicited by high potassium-induced depolarization, but does not block caffeine-stimulated contraction. May target voltage-gated calcium channels on smooth muscle. The protein is Cysteine-rich venom protein DIS3 of Dispholidus typus (Boomslang).